The primary structure comprises 407 residues: Histone acetyltransferase mst2 (407 aa).

In terms of domain architecture, MYST-type HAT spans Pro-98–Pro-372. A C2HC MYST-type zinc finger spans residues Leu-131–Trp-156. Position 198 is an N6-acetyllysine; by autocatalysis (Lys-198). Acetyl-CoA contacts are provided by residues Ile-241 to Thr-243, Thr-243, and Gln-248 to Val-254. The Proton donor/acceptor role is filled by Glu-274. Residues Ser-278 and Ser-287 each contribute to the acetyl-CoA site.

It belongs to the MYST (SAS/MOZ) family. As to quaternary structure, component of the mst2 complex composed of at least eaf6, mst2, nto1, pdp3, ptf1, ptf2 and tfg3. In terms of processing, autoacetylation at Lys-198 is required for proper function.

The protein resides in the cytoplasm. Its subcellular location is the nucleus. It catalyses the reaction L-lysyl-[protein] + acetyl-CoA = N(6)-acetyl-L-lysyl-[protein] + CoA + H(+). Component of the mst2 complex which is a highly specific H3 lysine 14 (H3K14) acetyltransferase that functions together with gcn5 to regulate global levels of H3K14 acetylation (H3K14ac), critical for DNA damage checkpoint activation. Negatively regulates telomere silencing. Telomere silencing is increased due to histone hypoacetylation and/or an increase in the ratio of methylated histones to acetylated histones. Telomeric histone acetylation contributes to normal meiotic progression. In Schizosaccharomyces pombe (strain 972 / ATCC 24843) (Fission yeast), this protein is Histone acetyltransferase mst2 (mst2).